The sequence spans 1320 residues: Immunoglobulin superfamily member 1 (1320 aa).

The signal sequence occupies residues methionine 1–glycine 18. Residues methionine 19–alanine 504 are Extracellular-facing. 5 consecutive Ig-like C2-type domains span residues proline 29 to glutamate 113, glutamate 115 to valine 212, histidine 224 to threonine 308, proline 312 to asparagine 399, and valine 401 to glutamate 482. An N-linked (GlcNAc...) asparagine glycan is attached at asparagine 44. Cysteine 49 and cysteine 97 are joined by a disulfide. N-linked (GlcNAc...) asparagine glycans are attached at residues asparagine 329, asparagine 365, and asparagine 372. 2 disulfides stabilise this stretch: cysteine 334/cysteine 383 and cysteine 423/cysteine 466. A helical transmembrane segment spans residues isoleucine 505 to tryptophan 525. Over lysine 526–glutamate 534 the chain is Cytoplasmic. The helical transmembrane segment at alanine 535 to cysteine 555 threads the bilayer. Over cysteine 556–isoleucine 1320 the chain is Extracellular. Ig-like C2-type domains follow at residues proline 572–aspartate 665, valine 662–isoleucine 756, proline 761–threonine 853, proline 857–threonine 942, threonine 949–valine 1044, proline 1049–asparagine 1134, and proline 1145–aspartate 1226. 9 N-linked (GlcNAc...) asparagine glycosylation sites follow: asparagine 591, asparagine 731, asparagine 782, asparagine 830, asparagine 874, asparagine 923, asparagine 970, asparagine 1011, and asparagine 1066. Cysteine 783 and cysteine 833 are oxidised to a cystine. Cysteine 879 and cysteine 926 form a disulfide bridge. Cysteine 1071 and cysteine 1118 are disulfide-bonded. 2 N-linked (GlcNAc...) asparagine glycosylation sites follow: asparagine 1131 and asparagine 1207. A disulfide bond links cysteine 1167 and cysteine 1210.

As to quaternary structure, interacts with INHA; the interaction is not confirmed by standard receptor binding assays. Interacts with ACVR1B; the interaction appears to be ligand-dependent as it is diminished by inhibin B and activin A. Interacts with ACVR2A, ACVR2B, ACVRL1 and BMPR1B. Interacts with HECTD1. As to expression, expressed in pituitary gland, testis and liver. Isoform 2 is expressed pituitary gland and testis.

It localises to the membrane. Its subcellular location is the secreted. Its function is as follows. Seems to be a coreceptor in inhibin signaling, but seems not to be a high-affinity inhibin receptor. Antagonizes activin A signaling in the presence or absence of inhibin B. Necessary to mediate a specific antagonistic effect of inhibin B on activin-stimulated transcription. The polypeptide is Immunoglobulin superfamily member 1 (Igsf1) (Rattus norvegicus (Rat)).